The primary structure comprises 174 residues: Acetolactate synthase small subunit (174 aa).

One can recognise an ACT domain in the interval 4-78 (TLSVLVQDEA…NILNVQDVTN (75 aa)).

The protein belongs to the acetolactate synthase small subunit family. As to quaternary structure, dimer of large and small chains.

Its subcellular location is the plastid. It is found in the chloroplast. It carries out the reaction 2 pyruvate + H(+) = (2S)-2-acetolactate + CO2. Its pathway is amino-acid biosynthesis; L-isoleucine biosynthesis; L-isoleucine from 2-oxobutanoate: step 1/4. It participates in amino-acid biosynthesis; L-valine biosynthesis; L-valine from pyruvate: step 1/4. This Porphyra purpurea (Red seaweed) protein is Acetolactate synthase small subunit (ilvH).